Consider the following 784-residue polypeptide: Toll-like receptor 2 (784 aa).

The N-terminal stretch at 1 to 24 (MLRALWLFWILVAITVLFSKRCSA) is a signal peptide. At 25–587 (QESLSCDASG…ARPSVLECHQ (563 aa)) the chain is on the extracellular side. Cys30 and Cys36 are oxidised to a cystine. LRR repeat units follow at residues 54 to 77 (MKSLDLSFNKITYIGHGDLRACAN), 78 to 101 (LQVLILKSSRINTIEGDAFYSLGS), 102 to 125 (LEHLDLSDNHLSSLSSSWFGPLSS), 126 to 150 (LKYLNLMGNPYQTLGVTSLFPNLTN), 151 to 175 (LQTLRIGNVETFSEIRRIDFAGLTS), 176 to 199 (LNELEIKALSLRNYQSQSLKSIRD), 200 to 223 (IHHLTLHLSESAFLLEIFADILSS), 224 to 250 (VRYLELRDTNLARFQFSPLPVDEVSSP), 251 to 278 (MKKLAFRGSVLTDESFNELLKLLRYILE), 279 to 308 (LSEVEFDDCTLNGLGDFNPSESDVVSELGK), 309 to 337 (VETVTIRRLHIPQFYLFYDLSTVYSLLEK), 338 to 361 (VKRITVENSKVFLVPCSFSQHLKS), 362 to 388 (LEFLDLSENLMVEEYLKNSACKGAWPS), 389 to 414 (LQTLVLSQNHLRSMQKTGEILLTLKN), 415 to 437 (LTSLDISRNTFHPMPDSCQWPEK), 438 to 457 (MRFLNLSSTGIRVVKTCIPQ), 458 to 478 (TLEVLDVSNNNLDSFSLFLPR), 479 to 500 (LQELYISRNKLKTLPDASLFPV), and 501 to 524 (LLVMKIRENAVSTFSKDQLGSFPK). An N-linked (GlcNAc...) asparagine glycan is attached at Asn147. A disulfide bridge links Cys353 with Cys382. The N-linked (GlcNAc...) asparagine glycan is linked to Asn414. Residues Cys432 and Cys454 are joined by a disulfide bond. Asn442 carries N-linked (GlcNAc...) asparagine glycosylation. The LRRCT domain occupies 525–576 (LETLEAGDNHFVCSCELLSFTMETPALAQILVDWPDSYLCDSPPRLHGHRLQ). The helical transmembrane segment at 588–608 (AALVSGVCCALLLLILLVGAL) threads the bilayer. The Cytoplasmic portion of the chain corresponds to 609-784 (CHHFHGLWYL…WVNLRTAIKS (176 aa)). Residues 639–782 (VCYDAFVSYS…VFWVNLRTAI (144 aa)) enclose the TIR domain. Lys754 participates in a covalent cross-link: Glycyl lysine isopeptide (Lys-Gly) (interchain with G-Cter in ubiquitin). The ATG16L1-binding motif motif lies at 761 to 778 (YLEWPLDEGQQEVFWVNL).

The protein belongs to the Toll-like receptor family. Interacts with LY96, TLR1 and TLR6 (via extracellular domain). TLR2 seems to exist in heterodimers with either TLR1 or TLR6 before stimulation by the ligand. The heterodimers form bigger oligomers in response to their corresponding ligands as well as further heterotypic associations with other receptors such as CD14 and/or CD36. Binds MYD88 (via TIR domain). Interacts with TICAM1. Interacts with CNPY3. Interacts with ATG16L1. Interacts with non-modified M.tuberculosis protein MPT83. Interacts with PPP1R11. Interacts with TIRAP. As to quaternary structure, (Microbial infection) Interacts with Staphylococcus aureus protein SSL3; this interaction inhibits TLR2-mediated cytokine production. In terms of assembly, (Microbial infection) Interacts with Toxoplasma gondii micronemal protein 1 (MIC1); the interaction promotes activation of bone marrow-derived dendritic cells and macrophages. Interacts with Toxoplasma gondii micronemal protein 4 (MIC4); the interaction promotes activation of bone marrow-derived dendritic cells and macrophages. Post-translationally, ubiquitinated at Lys-754 by PPP1R11, leading to its degradation. Deubiquitinated by USP2. Glycosylation of Asn-442 is critical for secretion of the N-terminal ectodomain of TLR2. As to expression, detected in a macrophage cell line, smooth muscle, lung, spleen, thymus, brain and adipose tissue. Cell surface expression detected in lung alveolar macrophages, dendritic macrophages and at lower levels in lung macrophages (at protein level).

The protein resides in the cell membrane. It localises to the cytoplasmic vesicle. Its subcellular location is the phagosome membrane. It is found in the membrane raft. Functionally, cooperates with LY96 to mediate the innate immune response to bacterial lipoproteins and other microbial cell wall components. Cooperates with TLR1 or TLR6 to mediate the innate immune response to bacterial lipoproteins or lipopeptides. Acts via MYD88 and TRAF6, leading to NF-kappa-B activation, cytokine secretion and the inflammatory response. May also promote apoptosis in response to lipoproteins. Forms activation clusters composed of several receptors depending on the ligand, these clusters trigger signaling from the cell surface and subsequently are targeted to the Golgi in a lipid-raft dependent pathway. Forms the cluster TLR2:TLR6:CD14:CD36 in response to diacylated lipopeptides and TLR2:TLR1:CD14 in response to triacylated lipopeptides. Recognizes M.tuberculosis major T-antigen EsxA (ESAT-6) which inhibits downstream MYD88-dependent signaling. Acts as the major receptor for M.tuberculosis lipoproteins LprA, LprG, LpqH and PhoS1 (pstS1), in conjunction with TLR1 and for some but not all lipoproteins CD14 and/or CD36. The lipoproteins act as agonists to modulate antigen presenting cell functions in response to the pathogen. Recombinant MPT83 from M.tuberculosis stimulates secretion of cytokines (TNF-alpha, IL-6 and IL-12p40) by mouse macrophage cell lines in a TLR2-dependent fashion, which leads to increased host innate immunity responses against the bacterium. Lung macrophages which express low levels of TLR2 respond poorly to stimulation by M.tuberculosis LpqH. Required for normal uptake of M.tuberculosis, a process that is inhibited by M.tuberculosis LppM. Interacts with TICAM2. In terms of biological role, (Microbial infection) Mediates activation of bone marrow-derived dendritic cells and macrophages, and production of pro-inflammatory cytokines, such as IL12 (IL12B/IL12A), triggered by Toxoplasma gondii micronemal protein 4 (MIC4) and micronemal protein 1 (MIC1). The sequence is that of Toll-like receptor 2 (Tlr2) from Mus musculus (Mouse).